A 250-amino-acid chain; its full sequence is 2,5-dichloro-2,5-cyclohexadiene-1,4-diol dehydrogenase (250 aa).

Residue 9 to 34 (IIVTGGGSGIGRATVELLVASGANVA) participates in NAD(+) binding. Ser141 lines the substrate pocket. Tyr154 (proton acceptor) is an active-site residue.

It belongs to the short-chain dehydrogenases/reductases (SDR) family.

It catalyses the reaction 2,5-dichlorocyclohexa-2,5-dien-1,4-diol + NAD(+) = 2,5-dichlorohydroquinone + NADH + H(+). Its pathway is xenobiotic degradation; gamma-hexachlorocyclohexane degradation. In terms of biological role, catalyzes the dehydrogenation of 2,5-dichloro-2,5-cyclohexadiene-1,4-diol (2,5-DDOL) to 2,5-dichlorohydroquinone (2,5-DCHQ), a step in the degradation of gamma-hexachlorocyclohexane (gamma-HCH or lindane). Has an essential role in this assimilation pathway that allows S.japonicum UT26 to grow on gamma-HCH as the sole source of carbon and energy. The polypeptide is 2,5-dichloro-2,5-cyclohexadiene-1,4-diol dehydrogenase (Sphingobium indicum (strain DSM 16413 / CCM 7287 / MTCC 6362 / UT26 / NBRC 101211 / UT26S) (Sphingobium japonicum)).